The chain runs to 199 residues: GTP cyclohydrolase-2 (199 aa).

A GTP-binding site is contributed by 49–53 (RIHSE). Zn(2+) contacts are provided by cysteine 54, cysteine 65, and cysteine 67. Residues glutamine 70, 92 to 94 (EGR), and threonine 114 contribute to the GTP site. Aspartate 126 acts as the Proton acceptor in catalysis. The active-site Nucleophile is arginine 128. GTP is bound by residues threonine 149 and lysine 154.

Belongs to the GTP cyclohydrolase II family. As to quaternary structure, homodimer. Zn(2+) is required as a cofactor.

It catalyses the reaction GTP + 4 H2O = 2,5-diamino-6-hydroxy-4-(5-phosphoribosylamino)-pyrimidine + formate + 2 phosphate + 3 H(+). The protein operates within cofactor biosynthesis; riboflavin biosynthesis; 5-amino-6-(D-ribitylamino)uracil from GTP: step 1/4. Functionally, catalyzes the conversion of GTP to 2,5-diamino-6-ribosylamino-4(3H)-pyrimidinone 5'-phosphate (DARP), formate and pyrophosphate. In Blochmanniella floridana, this protein is GTP cyclohydrolase-2.